The sequence spans 377 residues: tRNA-specific 2-thiouridylase MnmA (377 aa).

Residues 12 to 19 and methionine 38 contribute to the ATP site; that span reads GMSGGVDS. The interval 98–100 is interaction with target base in tRNA; the sequence is NPD. Cysteine 103 acts as the Nucleophile in catalysis. The cysteines at positions 103 and 200 are disulfide-linked. Glycine 127 serves as a coordination point for ATP. The segment at 150-152 is interaction with tRNA; it reads KDQ. The Cysteine persulfide intermediate role is filled by cysteine 200. Residues 314–315 are interaction with tRNA; sequence RY.

This sequence belongs to the MnmA/TRMU family.

The protein localises to the cytoplasm. The catalysed reaction is S-sulfanyl-L-cysteinyl-[protein] + uridine(34) in tRNA + AH2 + ATP = 2-thiouridine(34) in tRNA + L-cysteinyl-[protein] + A + AMP + diphosphate + H(+). Catalyzes the 2-thiolation of uridine at the wobble position (U34) of tRNA, leading to the formation of s(2)U34. This chain is tRNA-specific 2-thiouridylase MnmA, found in Limosilactobacillus reuteri (strain DSM 20016) (Lactobacillus reuteri).